A 393-amino-acid polypeptide reads, in one-letter code: Phosphoglycerate kinase (393 aa).

Substrate is bound by residues 22 to 24 (DFN), arginine 37, 60 to 63 (HLGR), arginine 119, and arginine 152. ATP-binding positions include lysine 202, glycine 293, glutamate 324, and 350 to 353 (GGDS).

The protein belongs to the phosphoglycerate kinase family. In terms of assembly, monomer.

It localises to the cytoplasm. It catalyses the reaction (2R)-3-phosphoglycerate + ATP = (2R)-3-phospho-glyceroyl phosphate + ADP. It participates in carbohydrate degradation; glycolysis; pyruvate from D-glyceraldehyde 3-phosphate: step 2/5. In Borreliella afzelii (strain PKo) (Borrelia afzelii), this protein is Phosphoglycerate kinase.